The primary structure comprises 171 residues: ATP synthase subunit b (171 aa).

The helical transmembrane segment at 10-30 threads the bilayer; sequence GLYYGDSIFYAVCFLLLMWII.

The protein belongs to the ATPase B chain family. As to quaternary structure, F-type ATPases have 2 components, F(1) - the catalytic core - and F(0) - the membrane proton channel. F(1) has five subunits: alpha(3), beta(3), gamma(1), delta(1), epsilon(1). F(0) has three main subunits: a(1), b(2) and c(10-14). The alpha and beta chains form an alternating ring which encloses part of the gamma chain. F(1) is attached to F(0) by a central stalk formed by the gamma and epsilon chains, while a peripheral stalk is formed by the delta and b chains.

It localises to the cell membrane. Its function is as follows. F(1)F(0) ATP synthase produces ATP from ADP in the presence of a proton or sodium gradient. F-type ATPases consist of two structural domains, F(1) containing the extramembraneous catalytic core and F(0) containing the membrane proton channel, linked together by a central stalk and a peripheral stalk. During catalysis, ATP synthesis in the catalytic domain of F(1) is coupled via a rotary mechanism of the central stalk subunits to proton translocation. Functionally, component of the F(0) channel, it forms part of the peripheral stalk, linking F(1) to F(0). This chain is ATP synthase subunit b, found in Levilactobacillus brevis (strain ATCC 367 / BCRC 12310 / CIP 105137 / JCM 1170 / LMG 11437 / NCIMB 947 / NCTC 947) (Lactobacillus brevis).